Reading from the N-terminus, the 126-residue chain is Non-specific lipid-transfer protein 15 (126 aa).

The first 22 residues, 1–22, serve as a signal peptide directing secretion; it reads MSKSIFVVCITLLVVLSPTLNA. Cystine bridges form between Cys34–Cys80, Cys45–Cys57, Cys58–Cys100, and Cys78–Cys114.

This sequence belongs to the plant LTP family.

Its function is as follows. Plant non-specific lipid-transfer proteins transfer phospholipids as well as galactolipids across membranes. May play a role in wax or cutin deposition in the cell walls of expanding epidermal cells and certain secretory tissues. The sequence is that of Non-specific lipid-transfer protein 15 (LTP15) from Arabidopsis thaliana (Mouse-ear cress).